The following is a 269-amino-acid chain: Peptide deformylase 1B, chloroplastic (269 aa).

The transit peptide at 1-51 (MAARLHLRLGPRLRGFASSFAPLLAAHPRALPLSRMGSVAPLAAARARRGF) directs the protein to the chloroplast. Fe cation is bound by residues C168 and H210. E211 is a catalytic residue. Position 214 (H214) interacts with Fe cation.

It belongs to the polypeptide deformylase family. In terms of assembly, homodimer. The cofactor is Fe(2+). As to expression, mainly expressed in mature leaves and sheaths.

The protein localises to the plastid. The protein resides in the chloroplast stroma. It is found in the mitochondrion. It catalyses the reaction N-terminal N-formyl-L-methionyl-[peptide] + H2O = N-terminal L-methionyl-[peptide] + formate. Inhibited by actinonin. Removes the formyl group from the N-terminal Met of newly synthesized proteins. In Oryza sativa subsp. japonica (Rice), this protein is Peptide deformylase 1B, chloroplastic (PDF1B).